A 416-amino-acid polypeptide reads, in one-letter code: Cysteate synthase (416 aa).

An N6-(pyridoxal phosphate)lysine modification is found at lysine 104. Residue asparagine 130 coordinates pyridoxal 5'-phosphate.

Belongs to the threonine synthase family. Cysteate synthase subfamily. As to quaternary structure, homotrimer. Requires pyridoxal 5'-phosphate as cofactor.

The enzyme catalyses O-phospho-L-serine + sulfite + H(+) = L-cysteate + phosphate. It participates in cofactor biosynthesis; coenzyme M biosynthesis. With respect to regulation, is inhibited by AP3 (DL-2-amino-3-phosphonopropionate) and, to a lesser extent, by L-aspartate or AP4 (DL-2-amino-4-phosphonobutyrate). Is also inhibited by EDTA in vitro. Functionally, specifically catalyzes the beta-elimination of phosphate from L-phosphoserine and the beta-addition of sulfite to the dehydroalanine intermediate to produce L-cysteate. Does not display threonine synthase activity like the paralog protein ThrC. The polypeptide is Cysteate synthase (Methanosarcina acetivorans (strain ATCC 35395 / DSM 2834 / JCM 12185 / C2A)).